The chain runs to 600 residues: DNA polymerase alpha subunit B (600 aa).

The disordered stretch occupies residues 107–165 (ETLLSSYTTPSKGPLKRVSSTPETPLTKRSVAARSPRQLLSPSSFSPSATPSQKYTSRT). Position 126 is a phosphoserine (Ser-126). Phosphothreonine is present on residues Thr-127 and Thr-130. A compositionally biased stretch (low complexity) spans 139-159 (ARSPRQLLSPSSFSPSATPSQ). Residues Ser-141, Ser-147, Ser-152, and Ser-154 each carry the phosphoserine modification.

Belongs to the DNA polymerase alpha subunit B family. Component of the alpha DNA polymerase complex (also known as the alpha DNA polymerase-primase complex) consisting of four subunits: the catalytic subunit POLA1, the regulatory subunit POLA2, and the primase complex subunits PRIM1 and PRIM2 respectively. Within the complex, POLA1 directly interacts with PRIM2. Phosphorylated in a cell cycle-dependent manner, in G2/M phase.

It is found in the nucleus. Accessory subunit of the DNA polymerase alpha complex (also known as the alpha DNA polymerase-primase complex) which plays an essential role in the initiation of DNA synthesis. During the S phase of the cell cycle, the DNA polymerase alpha complex (composed of a catalytic subunit POLA1, an accessory subunit POLA2 and two primase subunits, the catalytic subunit PRIM1 and the regulatory subunit PRIM2) is recruited to DNA at the replicative forks via direct interactions with MCM10 and WDHD1. The primase subunit of the polymerase alpha complex initiates DNA synthesis by oligomerising short RNA primers on both leading and lagging strands. These primers are initially extended by the polymerase alpha catalytic subunit and subsequently transferred to polymerase delta and polymerase epsilon for processive synthesis on the lagging and leading strand, respectively. This Mus musculus (Mouse) protein is DNA polymerase alpha subunit B (Pola2).